Reading from the N-terminus, the 564-residue chain is MSYPADDYESEAAYDPYAYPSDYDMHTGDPKQDLAYERQYEQQTYQVIPEVIKNFIQYFHKTVSDLIDQKVYELQASRVSSDVIDQKVYEIQDIYENSWTKLTERFFKNTPWPEAEAIAPQVGNDAVFLILYKELYYRHIYAKVSGGPSLEQRFESYYNYCNLFNYILNADGPAPLELPNQWLWDIIDEFIYQFQSFSQYRCKTAKKSEEEIDFLRSNPKIWNVHSVLNVLHSLVDKSNINRQLEVYTSGGDPESVAGEYGRHSLYKMLGYFSLVGLLRLHSLLGDYYQAIKVLENIELNKKSMYSRVPECQVTTYYYVGFAYLMMRRYQDAIRVFANILLYIQRTKSMFQRTTYKYEMINKQNEQMHALLAIALTMYPMRIDESIHLQLREKYGDKMLRMQKGDPQVYEELFSYSCPKFLSPVVPNYDNVHPNYHKEPFLQQLKVFSDEVQQQAQLSTIRSFLKLYTTMPVAKLAGFLDLTEQEFRIQLLVFKHKMKNLVWTSGISALDGEFQSASEVDFYIDKDMIHIADTKVARRYGDFFIRQIHKFEELNRTLKKMGQRP.

Serine 2 is modified (N-acetylserine). Position 21 is a phosphoserine (serine 21). One can recognise a PCI domain in the interval 331–537 (DAIRVFANIL…IHIADTKVAR (207 aa)). Residues lysine 465 and lysine 549 each carry the N6-acetyllysine modification.

Component of the eukaryotic translation initiation factor 3 (eIF-3) complex, which is composed of 13 subunits: EIF3A, EIF3B, EIF3C, EIF3D, EIF3E, EIF3F, EIF3G, EIF3H, EIF3I, EIF3J, EIF3K, EIF3L and EIF3M. The eIF-3 complex appears to include 3 stable modules: module A is composed of EIF3A, EIF3B, EIF3G and EIF3I; module B is composed of EIF3F, EIF3H, and EIF3M; and module C is composed of EIF3C, EIF3D, EIF3E, EIF3K and EIF3L. EIF3C of module C binds EIF3B of module A and EIF3H of module B, thereby linking the three modules. EIF3J is a labile subunit that binds to the eIF-3 complex via EIF3B. The eIF-3 complex interacts with RPS6KB1 under conditions of nutrient depletion. Mitogenic stimulation leads to binding and activation of a complex composed of MTOR and RPTOR, leading to phosphorylation and release of RPS6KB1 and binding of EIF4B to eIF-3. Interacts with RRN3.

Its subcellular location is the cytoplasm. In terms of biological role, component of the eukaryotic translation initiation factor 3 (eIF-3) complex, which is required for several steps in the initiation of protein synthesis. The eIF-3 complex associates with the 40S ribosome and facilitates the recruitment of eIF-1, eIF-1A, eIF-2:GTP:methionyl-tRNAi and eIF-5 to form the 43S pre-initiation complex (43S PIC). The eIF-3 complex stimulates mRNA recruitment to the 43S PIC and scanning of the mRNA for AUG recognition. The eIF-3 complex is also required for disassembly and recycling of post-termination ribosomal complexes and subsequently prevents premature joining of the 40S and 60S ribosomal subunits prior to initiation. The eIF-3 complex specifically targets and initiates translation of a subset of mRNAs involved in cell proliferation, including cell cycling, differentiation and apoptosis, and uses different modes of RNA stem-loop binding to exert either translational activation or repression. (Microbial infection) In case of FCV infection, plays a role in the ribosomal termination-reinitiation event leading to the translation of VP2. This Homo sapiens (Human) protein is Eukaryotic translation initiation factor 3 subunit L.